The sequence spans 331 residues: 6-phosphogluconolactonase (331 aa).

N6-acetyllysine is present on Lys-287.

The protein belongs to the cycloisomerase 2 family.

The enzyme catalyses 6-phospho-D-glucono-1,5-lactone + H2O = 6-phospho-D-gluconate + H(+). Its pathway is carbohydrate degradation; pentose phosphate pathway; D-ribulose 5-phosphate from D-glucose 6-phosphate (oxidative stage): step 2/3. Catalyzes the hydrolysis of 6-phosphogluconolactone to 6-phosphogluconate. The polypeptide is 6-phosphogluconolactonase (Escherichia coli O127:H6 (strain E2348/69 / EPEC)).